An 84-amino-acid chain; its full sequence is MGSMSPVHWLILAVVLLVVFGGGGKISGLMGDFAKGIKSFKKNMADDESMTATDATQAPGHISPPNQNPGYSQTTSSETHRNQV.

The helical transmembrane segment at 4 to 24 threads the bilayer; that stretch reads MSPVHWLILAVVLLVVFGGGG. The tract at residues 46–84 is disordered; it reads DDESMTATDATQAPGHISPPNQNPGYSQTTSSETHRNQV. Over residues 64–77 the composition is skewed to polar residues; that stretch reads PPNQNPGYSQTTSS.

The protein belongs to the TatA/E family. The Tat system comprises two distinct complexes: a TatABC complex, containing multiple copies of TatA, TatB and TatC subunits, and a separate TatA complex, containing only TatA subunits. Substrates initially bind to the TatABC complex, which probably triggers association of the separate TatA complex to form the active translocon.

Its subcellular location is the cell inner membrane. In terms of biological role, part of the twin-arginine translocation (Tat) system that transports large folded proteins containing a characteristic twin-arginine motif in their signal peptide across membranes. TatA could form the protein-conducting channel of the Tat system. This is Sec-independent protein translocase protein TatA from Gluconobacter oxydans (strain 621H) (Gluconobacter suboxydans).